The primary structure comprises 209 residues: Octanoyltransferase (209 aa).

The region spanning Asp30–Lys209 is the BPL/LPL catalytic domain. Substrate contacts are provided by residues Arg69–His76, Ala143–Gly145, and Gly156–Ala158. Cys174 (acyl-thioester intermediate) is an active-site residue.

Belongs to the LipB family.

Its subcellular location is the cytoplasm. It catalyses the reaction octanoyl-[ACP] + L-lysyl-[protein] = N(6)-octanoyl-L-lysyl-[protein] + holo-[ACP] + H(+). It functions in the pathway protein modification; protein lipoylation via endogenous pathway; protein N(6)-(lipoyl)lysine from octanoyl-[acyl-carrier-protein]: step 1/2. In terms of biological role, catalyzes the transfer of endogenously produced octanoic acid from octanoyl-acyl-carrier-protein onto the lipoyl domains of lipoate-dependent enzymes. Lipoyl-ACP can also act as a substrate although octanoyl-ACP is likely to be the physiological substrate. The sequence is that of Octanoyltransferase from Rickettsia conorii (strain ATCC VR-613 / Malish 7).